Reading from the N-terminus, the 263-residue chain is Elongation factor Ts (263 aa).

The segment at 82-85 is involved in Mg(2+) ion dislocation from EF-Tu; that stretch reads TDFV. A compositionally biased stretch (low complexity) spans 221–251; that stretch reads APPAVVEAPVAETPEPAVAETPEAKPAATES. A disordered region spans residues 221 to 263; the sequence is APPAVVEAPVAETPEPAVAETPEAKPAATESKPAKSKSAKKKK. Positions 254 to 263 are enriched in basic residues; sequence AKSKSAKKKK.

It belongs to the EF-Ts family.

It is found in the cytoplasm. Functionally, associates with the EF-Tu.GDP complex and induces the exchange of GDP to GTP. It remains bound to the aminoacyl-tRNA.EF-Tu.GTP complex up to the GTP hydrolysis stage on the ribosome. The protein is Elongation factor Ts of Cyanothece sp. (strain PCC 7425 / ATCC 29141).